The sequence spans 308 residues: CMP-N-acetylneuraminate:beta-galactoside alpha-2,3-sialyltransferase (308 aa).

Asp201 serves as the catalytic Proton acceptor. CMP-N-acetyl-beta-neuraminate-binding positions include 221 to 225 (LPHPR), 242 to 243 (FE), and 262 to 263 (SS). The Proton donor role is filled by His223.

It belongs to the glycosyltransferase 52 family. Requires Divalent metal cations are not required for the alpha-2,3-sialyltransferase activity. as cofactor.

In terms of biological role, catalyzes the transfer of sialic acid from the substrate CMP-N-acetylneuraminate to lactosyl lipids as preferred acceptor substrates in vitro, forming alpha-2,3-linked sialosides. Beta-1,4-linked galactosyl lipids are better substrates than beta-1,3-linked galactosyl lipids. The natural acceptor substrate may be cell surface oligosaccharides in lipooligosaccharide (LOS), whose sialylation has been demonstrated vital for the virulence of P.multocida. The chain is CMP-N-acetylneuraminate:beta-galactoside alpha-2,3-sialyltransferase (lst) from Pasteurella multocida (strain Pm70).